The chain runs to 440 residues: Transposon Ty1-MR1 Gag polyprotein (440 aa).

3 stretches are compositionally biased toward polar residues: residues 1 to 31 (MESQQLSQHSPISHGSACASVTSKEVQTTQD), 46 to 60 (VSTQANSQQPTTPLS), and 137 to 168 (VGTHLNTPSPESGNSFPDSSSAKSNMTSTNQH). Disordered regions lie at residues 1-88 (MESQ…YPQQ), 137-174 (VGTHLNTPSPESGNSFPDSSSAKSNMTSTNQHVRPPPI), and 350-424 (QQES…TTEP). The RNA-binding stretch occupies residues 299-401 (NNGIPINNKV…NSQSRTARAH (103 aa)). The segment covering 363-372 (SPSDEKKDSR) has biased composition (basic and acidic residues). Positions 373–411 (TYTNTTKPKSITRNSQKPNNSQSRTARAHNVSTFNNSPG) are enriched in polar residues.

In terms of assembly, homotrimer.

Its subcellular location is the cytoplasm. In terms of biological role, capsid protein (CA) is the structural component of the virus-like particle (VLP), forming the shell that encapsulates the retrotransposons dimeric RNA genome. The particles are assembled from trimer-clustered units and there are holes in the capsid shells that allow for the diffusion of macromolecules. CA also has nucleocapsid-like chaperone activity, promoting primer tRNA(i)-Met annealing to the multipartite primer-binding site (PBS), dimerization of Ty1 RNA and initiation of reverse transcription. In Saccharomyces cerevisiae (strain ATCC 204508 / S288c) (Baker's yeast), this protein is Transposon Ty1-MR1 Gag polyprotein (TY1A-MR1).